A 677-amino-acid polypeptide reads, in one-letter code: MDRGLPGPATPAVTPQPPARPQDDEEAAAPHAAAGPDGQLGTVEQRLEPAKRAAHNIHKRLQACLQGQSGADMDKRVKKLPLMALSTTMAESFKELDPDSSMGKALEMSCAIQNQLARILAEFEMTLERDVLQPLSRLSEEELPAILKHKKSLQKLVSDWNTLKSRLSQATKNSGSSQGLGGSPGSHSHTTMANKVETLKEEEEELKRKVEQCRDEYLADLYHFVTKEDSYANYFIRLLEIQADYHRRSLSSLDTALAELRENHGQADHSPSMTATHFPRVYGVSLATHLQELGREIALPIEACVMMLLSEGMKEEGLFRLAAGASVLKRLKQTMASDPHSLEEFCSDPHAVAGALKSYLRELPEPLMTFDLYDDWMRAASLKEPGARLQALQEVCSRLPPENLSNLRYLMKFLARLAEEQEVNKMTPSNIAIVLGPNLLWPPEKEGDQAQLDAASVSSIQVVGVVEALIQSADTLFPGDINFNVSGLFSAVTLQDTVSDRLASEELPSTAVPTPATTPAPAPAPAPAPAPALASAATKERTESEVPPRPASPKVTRSPPETAAPVEDMARRSTGSLAAAVETASGRQALVVGKPSPYMFECITENFSIDPARTLMVGDRLETDILFGHRCGMTTVLTLTGVSRLEEAQAYLAAGQHDLVPHYYVESIADLTEGLED.

2 stretches are compositionally biased toward low complexity: residues M1–V13 and A29–Q39. Disordered stretches follow at residues M1–Q39 and S168–T190. The BAR domain occupies E25–S270. Phosphoserine occurs at positions 183, 270, and 272. One can recognise a Rho-GAP domain in the interval V284–F477. Positions S504–L577 are disordered. The span at A516–A530 shows a compositional bias: pro residues. A phosphoserine mark is found at S552 and S558. The interval T574–D677 is mediates non-covalent binding of poly-ubiquitin chains.

In terms of tissue distribution, expressed in brain (at protein level).

Its subcellular location is the cell membrane. The protein localises to the cytoplasm. The protein resides in the cytosol. Its function is as follows. GTPase activating protein (GAP) which specifically converts GTP-bound RAC1 and CDC42 in their inactive GDP-bound form. The GAP activity is enhanced by the non-covalent binding of K-29 and K-48 polyubiquitin chains. In Homo sapiens (Human), this protein is Bargin.